We begin with the raw amino-acid sequence, 572 residues long: Frizzled-7 (572 aa).

Positions 1-32 are cleaved as a signal peptide; that stretch reads MRGPGTAASHSPLGLCALVLALLGALPTDTRA. Residues 33-254 are Extracellular-facing; it reads QPYHGEKGIS…EEERRFARLW (222 aa). An FZ domain is found at 44–163; the sequence is PDHGFCQPIS…HGAGEICVGQ (120 aa). 5 disulfides stabilise this stretch: C49/C110, C57/C103, C94/C131, C120/C160, and C124/C148. N63 is a glycosylation site (N-linked (GlcNAc...) asparagine). N164 is a glycosylation site (N-linked (GlcNAc...) asparagine). Residues 255–275 form a helical membrane-spanning segment; sequence VGVWSVLCCASTLFTVLTYLV. Over 276–286 the chain is Cytoplasmic; it reads DMRRFSYPERP. Residues 287–307 traverse the membrane as a helical segment; sequence IIFLSGCYFMVAVAHVAGFLL. Over 308–334 the chain is Extracellular; that stretch reads EDRAVCVERFSDDGYRTVAQGTKKEGC. Residues 335-355 form a helical membrane-spanning segment; the sequence is TILFMVLYFFGMASSIWWVIL. Residues 356-377 are Cytoplasmic-facing; that stretch reads SLTWFLAAGMKWGHEAIEANSQ. A helical transmembrane segment spans residues 378 to 398; it reads YFHLAAWAVPAVKTITILAMG. Residues 399–421 are Extracellular-facing; the sequence is QVDGDLLSGVCYVGLSSVDALRG. A helical membrane pass occupies residues 422–442; that stretch reads FVLAPLFVYLFIGTSFLLAGF. Over 443-468 the chain is Cytoplasmic; it reads VSLFRIRTIMKHDGTKTEKLEKLMVR. Residues 469-489 traverse the membrane as a helical segment; that stretch reads IGVFSVLYTVPATIVLACYFY. The Extracellular portion of the chain corresponds to 490–526; that stretch reads EQAFREHWERTWLLQTCKSYAVPCPPGHFSPMSPDFT. Residues 527-547 traverse the membrane as a helical segment; that stretch reads VFMIKYLMTMIVGITTGFWIW. Topologically, residues 548 to 572 are cytoplasmic; that stretch reads SGKTLQSWRRFYHRLSHSSKGETAV. The Lys-Thr-X-X-X-Trp motif, mediates interaction with the PDZ domain of Dvl family members signature appears at 550 to 555; it reads KTLQSW. Positions 570–572 match the PDZ-binding motif; it reads TAV.

This sequence belongs to the G-protein coupled receptor Fz/Smo family. Interacts with MAGI3. Interacts with DVL1. Interacts with CCDC88C/DAPLE; the interaction displaces DVL1 from FZD7, leading to inhibition of canonical Wnt signaling and triggering of non-canonical Wnt responses. Interacts with MYOC. Binds to SDCBP; this interaction is increased by inositol trisphosphate (IP3). Interacts with glypican GPC3. Post-translationally, ubiquitinated by ZNRF3, leading to its degradation by the proteasome.

The protein localises to the cell membrane. The protein resides in the endosome membrane. Its function is as follows. Receptor for Wnt proteins. Most frizzled receptors are coupled to the beta-catenin canonical signaling pathway, which leads to the activation of disheveled proteins, inhibition of GSK-3 kinase, nuclear accumulation of beta-catenin and activation of Wnt target genes. A second signaling pathway involving PKC and calcium fluxes has been seen for some family members, but it is not yet clear if it represents a distinct pathway or if it can be integrated in the canonical pathway, as PKC seems to be required for Wnt-mediated inactivation of GSK-3 kinase. Both pathways seem to involve interactions with G-proteins. Activation by WNT8 induces expression of beta-catenin target genes. Following ligand activation, binds to CCDC88C/DAPLE which displaces DVL1 from FZD7 and leads to inhibition of canonical Wnt signaling, activation of G-proteins by CCDC88C and triggering of non-canonical Wnt responses. May be involved in transduction and intercellular transmission of polarity information during tissue morphogenesis and/or in differentiated tissues. The protein is Frizzled-7 (Fzd7) of Mus musculus (Mouse).